The following is a 147-amino-acid chain: UPF0251 protein CTC_01373 (147 aa).

It belongs to the UPF0251 family.

In Clostridium tetani (strain Massachusetts / E88), this protein is UPF0251 protein CTC_01373.